The following is a 207-amino-acid chain: Large ribosomal subunit protein uL4 (207 aa).

Residues 50–75 form a disordered region; that stretch reads KTKTRSEVAGSGKKPFKQKGTGNARQ.

It belongs to the universal ribosomal protein uL4 family. Part of the 50S ribosomal subunit.

In terms of biological role, one of the primary rRNA binding proteins, this protein initially binds near the 5'-end of the 23S rRNA. It is important during the early stages of 50S assembly. It makes multiple contacts with different domains of the 23S rRNA in the assembled 50S subunit and ribosome. Forms part of the polypeptide exit tunnel. The chain is Large ribosomal subunit protein uL4 from Pelobacter propionicus (strain DSM 2379 / NBRC 103807 / OttBd1).